The sequence spans 124 residues: Multifunctional methyltransferase subunit TRM112 homolog A (124 aa).

The TRM112 domain maps to 2–120 (RLITHNMLSC…NKGIPNMLLH (119 aa)).

This sequence belongs to the TRM112 family. In terms of assembly, interacts with TRM9.

In terms of biological role, acts as an activator of both rRNA/tRNA and protein methyltransferases. Required for TRM9 tRNA methyltransferase activity. Involved in the regulation of cell division progression during organ growth. Required for the expression of cell cycle-related genes, and the G2-M phase progression during organogenesis. The chain is Multifunctional methyltransferase subunit TRM112 homolog A from Arabidopsis thaliana (Mouse-ear cress).